Here is a 161-residue protein sequence, read N- to C-terminus: Nuclear transcription factor Y subunit B-3 (161 aa).

Residues 1-23 (MADSDNDSGGHKDGGNASTREQD) form a disordered region. The residue at position 2 (alanine 2) is an N-acetylalanine. Residues 8–23 (SGGHKDGGNASTREQD) are compositionally biased toward basic and acidic residues. A DNA-binding region spans residues 26-32 (LPIANVS). A subunit association domain (SAD) region spans residues 53-64 (VQECVSEFISFI). The tract at residues 114–146 (EKTTTAGRQGDKEGGGGGGGAGSGSGGAPMYGG) is disordered. The span at 128-146 (GGGGGGAGSGSGGAPMYGG) shows a compositional bias: gly residues.

This sequence belongs to the NFYB/HAP3 subunit family. As to quaternary structure, heterotrimeric transcription factor composed of three components, NF-YA, NF-YB and NF-YC. NF-YB and NF-YC must interact and dimerize for NF-YA association and DNA binding. Component of a heat stress-inducible transcriptional complex with NF-YA and NF-YB subunits made, at least, of NFYA2, NFYB3 and DPB3-1 in cooperation with DREB2A. Binds directly with DPB3-1. Ubiquitous. Expressed in seedlings, petioles, hypocotyls, reproductive organ tissues and leaves.

It is found in the nucleus. It localises to the cytoplasm. The protein localises to the cytosol. In terms of biological role, component of the NF-Y/HAP transcription factor complex. The NF-Y complex stimulates the transcription of various genes by recognizing and binding to a CCAAT motif in promoters. Promotes the expression of heat stress-inducible genes by contributing to the formation of a heat stress-specific transcriptional complex with NF-Y subunits (e.g. DPB3-1, NF-YA2 and NF-YB3) and DREB2A at the promoter of target genes, thus promoting heat tolerance. The chain is Nuclear transcription factor Y subunit B-3 from Arabidopsis thaliana (Mouse-ear cress).